Reading from the N-terminus, the 315-residue chain is DNA-directed RNA polymerase subunit alpha (315 aa).

An alpha N-terminal domain (alpha-NTD) region spans residues 1-228; it reads MLEIEKPKIE…EHLRLFIGLT (228 aa). The interval 246 to 315 is alpha C-terminal domain (alpha-CTD); sequence DKILEMTIEE…LGLSLRQEDE (70 aa).

The protein belongs to the RNA polymerase alpha chain family. Homodimer. The RNAP catalytic core consists of 2 alpha, 1 beta, 1 beta' and 1 omega subunit. When a sigma factor is associated with the core the holoenzyme is formed, which can initiate transcription.

The catalysed reaction is RNA(n) + a ribonucleoside 5'-triphosphate = RNA(n+1) + diphosphate. In terms of biological role, DNA-dependent RNA polymerase catalyzes the transcription of DNA into RNA using the four ribonucleoside triphosphates as substrates. The chain is DNA-directed RNA polymerase subunit alpha from Desulforamulus reducens (strain ATCC BAA-1160 / DSM 100696 / MI-1) (Desulfotomaculum reducens).